A 319-amino-acid chain; its full sequence is Ferrochelatase (319 aa).

Residues histidine 194 and glutamate 275 each contribute to the Fe cation site.

It belongs to the ferrochelatase family.

The protein localises to the cytoplasm. The enzyme catalyses heme b + 2 H(+) = protoporphyrin IX + Fe(2+). It functions in the pathway porphyrin-containing compound metabolism; protoheme biosynthesis; protoheme from protoporphyrin-IX: step 1/1. Its function is as follows. Catalyzes the ferrous insertion into protoporphyrin IX. This chain is Ferrochelatase, found in Vibrio vulnificus (strain YJ016).